Consider the following 364-residue polypeptide: Phosrestin-2 (364 aa).

Belongs to the arrestin family. Phosphorylated, but does not undergo light-induced phosphorylation. In terms of tissue distribution, expressed specifically and abundantly in photoreceptor cells in retina and ocelli.

It is found in the cell projection. The protein resides in the rhabdomere. Regulates photoreceptor cell deactivation. Arr1 and Arr2 proteins are mediators of rhodopsin inactivation and are essential for the termination of the phototransduction cascade. Involved in regulating normal cycles of per nuclear accumulation in brain circadian neurons and thus is important for normal circadian behavior. In the dark, functions with Arr2 to promote the formation of cytosolic Bdbt foci, which are required for dco localization to photoreceptor nuclei where it phosphorylates and activates degradation of per. The polypeptide is Phosrestin-2 (Arr1) (Drosophila melanogaster (Fruit fly)).